The following is a 109-amino-acid chain: FK506-binding protein (109 aa).

The PPIase FKBP-type domain occupies 20–108 (GKEITVHYTG…IFEVELLKVY (89 aa)).

Belongs to the FKBP-type PPIase family.

The catalysed reaction is [protein]-peptidylproline (omega=180) = [protein]-peptidylproline (omega=0). Inhibited by FK506. PPIases accelerate the folding of proteins. This Neisseria meningitidis serogroup B (strain ATCC BAA-335 / MC58) protein is FK506-binding protein (fbp).